Consider the following 369-residue polypeptide: Ferrochelatase (369 aa).

Residues His-210 and Glu-291 each coordinate Fe cation.

Belongs to the ferrochelatase family.

It is found in the cytoplasm. It catalyses the reaction heme b + 2 H(+) = protoporphyrin IX + Fe(2+). It functions in the pathway porphyrin-containing compound metabolism; protoheme biosynthesis; protoheme from protoporphyrin-IX: step 1/1. Functionally, catalyzes the ferrous insertion into protoporphyrin IX. In Thioalkalivibrio sulfidiphilus (strain HL-EbGR7), this protein is Ferrochelatase.